The primary structure comprises 198 residues: MSGPGATAVGIKVKDGVVLAAERRMSYGGFIMSKAARKVFKVGDRMGMACAGLYADMQAIARALENEIRYYEISNKRKMKVRSAARLLGLILYSNKLFPLMTETVFGGYDDEPRIFVLDPVGSVIEEKYSAVGTGAPLAMALLDKEYREDMSLEEAQNLAIESVKVASGRDSLSGDGIDVLVIPFGGKPSIRTVSLEA.

The propeptide at 1-6 (MSGPGA) is removed in mature form; by autocatalysis. Threonine 7 acts as the Nucleophile in catalysis.

This sequence belongs to the peptidase T1B family. The 20S proteasome core is composed of 14 alpha and 14 beta subunits that assemble into four stacked heptameric rings, resulting in a barrel-shaped structure. The two inner rings, each composed of seven catalytic beta subunits, are sandwiched by two outer rings, each composed of seven alpha subunits. The catalytic chamber with the active sites is on the inside of the barrel. Has a gated structure, the ends of the cylinder being occluded by the N-termini of the alpha-subunits. Is capped at one or both ends by the proteasome regulatory ATPase, PAN.

The protein localises to the cytoplasm. It catalyses the reaction Cleavage of peptide bonds with very broad specificity.. Its activity is regulated as follows. The formation of the proteasomal ATPase PAN-20S proteasome complex, via the docking of the C-termini of PAN into the intersubunit pockets in the alpha-rings, triggers opening of the gate for substrate entry. Interconversion between the open-gate and close-gate conformations leads to a dynamic regulation of the 20S proteasome proteolysis activity. Its function is as follows. Component of the proteasome core, a large protease complex with broad specificity involved in protein degradation. The protein is Proteasome subunit beta 1 of Ignicoccus hospitalis (strain KIN4/I / DSM 18386 / JCM 14125).